Reading from the N-terminus, the 299-residue chain is Ribosomal RNA small subunit methyltransferase H (299 aa).

S-adenosyl-L-methionine-binding positions include G45–H47, D64, F92, D108, and Q115. The tract at residues P275 to Q299 is disordered. The segment covering P284–Q299 has biased composition (basic residues).

This sequence belongs to the methyltransferase superfamily. RsmH family.

Its subcellular location is the cytoplasm. The enzyme catalyses cytidine(1402) in 16S rRNA + S-adenosyl-L-methionine = N(4)-methylcytidine(1402) in 16S rRNA + S-adenosyl-L-homocysteine + H(+). Functionally, specifically methylates the N4 position of cytidine in position 1402 (C1402) of 16S rRNA. This Gloeothece citriformis (strain PCC 7424) (Cyanothece sp. (strain PCC 7424)) protein is Ribosomal RNA small subunit methyltransferase H.